The following is a 266-amino-acid chain: F-box only protein 50 (266 aa).

Residues 1–16 (MEKTQDRDTLSGRMEA) are compositionally biased toward basic and acidic residues. Positions 1–53 (MEKTQDRDTLSGRMEAEGSLNSEELPPHPQSPPPPPSPRSPTSPVTPELPQPN) are disordered. Positions 27–41 (PHPQSPPPPPSPRSP) are enriched in pro residues. S31, S37, S40, and S43 each carry phosphoserine. T46 is modified (phosphothreonine). One can recognise an FBA domain in the interval 86–264 (LFLERPLYRN…VTDSSVSVQL (179 aa)).

As to expression, strongly expressed in kidney. Weakly expressed in stomach, colon, duodenum and prostate.

It localises to the cytoplasm. Its function is as follows. Promotes cell proliferation. This chain is F-box only protein 50 (Nccrp1), found in Mus musculus (Mouse).